The primary structure comprises 443 residues: UDP-N-acetylmuramate--L-alanine ligase (443 aa).

110–116 contributes to the ATP binding site; sequence GAHGKTS.

The protein belongs to the MurCDEF family.

It localises to the cytoplasm. The enzyme catalyses UDP-N-acetyl-alpha-D-muramate + L-alanine + ATP = UDP-N-acetyl-alpha-D-muramoyl-L-alanine + ADP + phosphate + H(+). It participates in cell wall biogenesis; peptidoglycan biosynthesis. Functionally, cell wall formation. This is UDP-N-acetylmuramate--L-alanine ligase from Streptococcus gordonii (strain Challis / ATCC 35105 / BCRC 15272 / CH1 / DL1 / V288).